The following is a 538-amino-acid chain: Putative cysteine ligase BshC (538 aa).

A coiled-coil region spans residues 454–482 (LEKNAGFIQDQLQFLEKTVIRRIEEKENY).

Belongs to the BshC family.

Its function is as follows. Involved in bacillithiol (BSH) biosynthesis. May catalyze the last step of the pathway, the addition of cysteine to glucosamine malate (GlcN-Mal) to generate BSH. The protein is Putative cysteine ligase BshC of Bacillus licheniformis (strain ATCC 14580 / DSM 13 / JCM 2505 / CCUG 7422 / NBRC 12200 / NCIMB 9375 / NCTC 10341 / NRRL NRS-1264 / Gibson 46).